The sequence spans 187 residues: UPF0340 protein SPJ_0612 (187 aa).

It belongs to the UPF0340 family.

This chain is UPF0340 protein SPJ_0612, found in Streptococcus pneumoniae (strain JJA).